Here is a 349-residue protein sequence, read N- to C-terminus: Myocyte-specific enhancer factor 2B (349 aa).

The 55-residue stretch at 3–57 folds into the MADS-box domain; sequence RKKIQISRILDQRNRQVTFTKRKFGLMKKAYELSVLCDCDIALIIFNSAQRLFQY. The segment at residues 58–86 is a DNA-binding region (mef2-type); the sequence is ASSDMDRVLLKYTEYSEPHESRTNADILQ. Disordered regions lie at residues 237-317 and 330-349; these read GSFA…DFPR and AEPL…SWPR.

Belongs to the MEF2 family. As to quaternary structure, heterodimer. Interacts with HDAC9. Interacts with HDAC7. In terms of tissue distribution, highest expression found in embryonic heart and skeletal muscle. Low levels found in adult spleen, lung and testis while no expression is found in adult heart, brain or skeletal muscle.

It localises to the nucleus. Transcriptional activator which binds specifically to the MEF2 element, 5'-YTA[AT](4)TAR-3', found in numerous muscle-specific genes. Activates transcription via this element. May be involved in muscle-specific and/or growth factor-related transcription. This is Myocyte-specific enhancer factor 2B (Mef2b) from Mus musculus (Mouse).